The following is a 101-amino-acid chain: Small ribosomal subunit protein uS14 (101 aa).

Belongs to the universal ribosomal protein uS14 family. In terms of assembly, part of the 30S ribosomal subunit. Contacts proteins S3 and S10.

Functionally, binds 16S rRNA, required for the assembly of 30S particles and may also be responsible for determining the conformation of the 16S rRNA at the A site. This chain is Small ribosomal subunit protein uS14, found in Blochmanniella floridana.